The following is a 211-amino-acid chain: Transcriptional regulator GfcR (211 aa).

Belongs to the purine/pyrimidine phosphoribosyltransferase family. GfcR subfamily.

In terms of biological role, DNA-binding transcriptional regulator that functions as a regulator of central sugar catabolic pathways. The chain is Transcriptional regulator GfcR from Halorubrum lacusprofundi (strain ATCC 49239 / DSM 5036 / JCM 8891 / ACAM 34).